The primary structure comprises 392 residues: MPLSNRRFNHKIKHALEARETQGLYRQRACLSRADQSVYHQGTSLLNFSSNDYLGLAQDPAILSAWQEGLTLFGAGSGASPLVTGFHSAHKALEDQLADWLGYDRALLFNSGFSANQAVLFTIPDKHDVLIQDKLNHASLMEAGLLSPATMRRFAHNDLSALTRLLHQTNDKFPSINPLVITEGVFSMDGDLSPLANISEQCSQHDAWLMVDDAHGCGVLGDKGRGSCDLAGVKADILIVTFGKAFGLSGAAVMCNNDTAEYLIQFARHFIYSTSMPPSQAHALSAACRLIQSDDWRREKLHDLGYLLFENVESSIQLVDTHTPIKPLIIGDSHKALSVSNALKAKGLWVSAIRPPTVPVNSARLRITLTAAHTEQDIKRLATTLNEVINDE.

Arg-26 contacts substrate. 112–113 (GF) is a binding site for pyridoxal 5'-phosphate. Position 137 (His-137) interacts with substrate. Ser-187, His-215, and Thr-241 together coordinate pyridoxal 5'-phosphate. Lys-244 carries the post-translational modification N6-(pyridoxal phosphate)lysine. Thr-357 is a substrate binding site.

This sequence belongs to the class-II pyridoxal-phosphate-dependent aminotransferase family. BioF subfamily. Homodimer. It depends on pyridoxal 5'-phosphate as a cofactor.

The catalysed reaction is 6-carboxyhexanoyl-[ACP] + L-alanine + H(+) = (8S)-8-amino-7-oxononanoate + holo-[ACP] + CO2. The protein operates within cofactor biosynthesis; biotin biosynthesis. In terms of biological role, catalyzes the decarboxylative condensation of pimeloyl-[acyl-carrier protein] and L-alanine to produce 8-amino-7-oxononanoate (AON), [acyl-carrier protein], and carbon dioxide. The protein is 8-amino-7-oxononanoate synthase of Photobacterium profundum (strain SS9).